The chain runs to 154 residues: MQEKSIRLGIVVAEFNYDITQLMLQKALSHARFLNVEVKVVIKVPGTFDMPLAIKKLLEKDFIDAVVTLGAVIKGETKHDELVASQTARKIVDLSTEFNKPVTLGIIGHGATHEQAVERIEEYATRAVEAAIKLVQRTRKLDELKEIKETVIIE.

Residues Phe15, 47–49 (TFD), and 71–73 (AVI) each bind 5-amino-6-(D-ribitylamino)uracil. 76 to 77 (ET) contributes to the (2S)-2-hydroxy-3-oxobutyl phosphate binding site. His79 (proton donor) is an active-site residue. A 5-amino-6-(D-ribitylamino)uracil-binding site is contributed by Leu104. A (2S)-2-hydroxy-3-oxobutyl phosphate-binding site is contributed by Arg119.

Belongs to the DMRL synthase family.

It carries out the reaction (2S)-2-hydroxy-3-oxobutyl phosphate + 5-amino-6-(D-ribitylamino)uracil = 6,7-dimethyl-8-(1-D-ribityl)lumazine + phosphate + 2 H2O + H(+). It functions in the pathway cofactor biosynthesis; riboflavin biosynthesis; riboflavin from 2-hydroxy-3-oxobutyl phosphate and 5-amino-6-(D-ribitylamino)uracil: step 1/2. In terms of biological role, catalyzes the formation of 6,7-dimethyl-8-ribityllumazine by condensation of 5-amino-6-(D-ribitylamino)uracil with 3,4-dihydroxy-2-butanone 4-phosphate. This is the penultimate step in the biosynthesis of riboflavin. This is 6,7-dimethyl-8-ribityllumazine synthase from Saccharolobus solfataricus (strain ATCC 35092 / DSM 1617 / JCM 11322 / P2) (Sulfolobus solfataricus).